Consider the following 382-residue polypeptide: Mannitol-1-phosphate 5-dehydrogenase (382 aa).

Residue 4–15 participates in NAD(+) binding; the sequence is AVHFGAGNIGRG.

The protein belongs to the mannitol dehydrogenase family. As to quaternary structure, monomer.

It catalyses the reaction D-mannitol 1-phosphate + NAD(+) = beta-D-fructose 6-phosphate + NADH + H(+). This is Mannitol-1-phosphate 5-dehydrogenase (mtlD) from Streptococcus mutans serotype c (strain ATCC 700610 / UA159).